The following is a 256-amino-acid chain: GTP cyclohydrolase FolE2 (256 aa).

The protein belongs to the GTP cyclohydrolase IV family.

The enzyme catalyses GTP + H2O = 7,8-dihydroneopterin 3'-triphosphate + formate + H(+). Its pathway is cofactor biosynthesis; 7,8-dihydroneopterin triphosphate biosynthesis; 7,8-dihydroneopterin triphosphate from GTP: step 1/1. In terms of biological role, converts GTP to 7,8-dihydroneopterin triphosphate. In Caldicellulosiruptor bescii (strain ATCC BAA-1888 / DSM 6725 / KCTC 15123 / Z-1320) (Anaerocellum thermophilum), this protein is GTP cyclohydrolase FolE2.